We begin with the raw amino-acid sequence, 194 residues long: dTTP/UTP pyrophosphatase (194 aa).

Asp76 serves as the catalytic Proton acceptor.

The protein belongs to the Maf family. YhdE subfamily. Requires a divalent metal cation as cofactor.

It localises to the cytoplasm. The enzyme catalyses dTTP + H2O = dTMP + diphosphate + H(+). It carries out the reaction UTP + H2O = UMP + diphosphate + H(+). Its function is as follows. Nucleoside triphosphate pyrophosphatase that hydrolyzes dTTP and UTP. May have a dual role in cell division arrest and in preventing the incorporation of modified nucleotides into cellular nucleic acids. This is dTTP/UTP pyrophosphatase from Shewanella sp. (strain MR-7).